We begin with the raw amino-acid sequence, 269 residues long: MSRLEQRFAELKAEGRSALVTFVTAGDPGYDASLEILKGLPAAGADVIELGMPFTDPMADGVAIQLATLRALEAGQTLAKTLQMVREFRVGNQTTPIVLMGYYNPIHRFGVEQFVAEAKEAGVDGLIIVDLPPEHDAELATPAQAAGIDFIRLTTPTTDDARLPRVLERSSGFVYYVSVAGVTGAGSATTEHVTEAIARLRRHTDLPISVGFGIRTPEQAAAIARLADGVVVGSALVDKIAQAKDAGQAVKDVLSLCSALADGVRAARV.

Active-site proton acceptor residues include glutamate 49 and aspartate 60.

Belongs to the TrpA family. In terms of assembly, tetramer of two alpha and two beta chains.

It catalyses the reaction (1S,2R)-1-C-(indol-3-yl)glycerol 3-phosphate + L-serine = D-glyceraldehyde 3-phosphate + L-tryptophan + H2O. Its pathway is amino-acid biosynthesis; L-tryptophan biosynthesis; L-tryptophan from chorismate: step 5/5. The alpha subunit is responsible for the aldol cleavage of indoleglycerol phosphate to indole and glyceraldehyde 3-phosphate. This is Tryptophan synthase alpha chain from Pseudomonas entomophila (strain L48).